A 370-amino-acid chain; its full sequence is Protein rough sheath 2 (370 aa).

2 consecutive HTH myb-type domains span residues 1–53 (MKER…KNYL) and 54–108 (RPGI…EKQQ). 2 consecutive DNA-binding regions (H-T-H motif) follow at residues 27-53 (WHLV…KNYL) and 81-104 (WKKI…EVFK). The interval 107-129 (QQRELRDSRRPPPEPSPDERGRY) is disordered. The stretch at 276–340 (KRVEQQLEME…QVKEEKMAEQ (65 aa)) forms a coiled coil.

In terms of assembly, homodimer. Interacts with AS2, WRKY1, HIRA, a probable histone chaperone, and RIK, a predicted RNA binding protein. In terms of tissue distribution, expressed in lateral organ promordia.

It is found in the nucleus. Functionally, transcription factor required for normal cell differentiation. Interacts directly with asymmetric leaves 2 (AS2) to repress the knox homeobox genes. The chain is Protein rough sheath 2 (RS2) from Zea mays (Maize).